The chain runs to 321 residues: Glucan 1,3-beta-glucosidase (321 aa).

The first 21 residues, 1 to 21 (MQFLSSFVFAALALLPLSAMA), serve as a signal peptide directing secretion. Residues N39 and N99 are each glycosylated (N-linked (GlcNAc...) asparagine). E141 (proton donor) is an active-site residue. N-linked (GlcNAc...) asparagine glycans are attached at residues N210, N213, and N237. E244 serves as the catalytic Nucleophile. N-linked (GlcNAc...) asparagine glycans are attached at residues N309 and N317.

Belongs to the glycosyl hydrolase 17 family.

It is found in the secreted. Its subcellular location is the cell wall. The catalysed reaction is Successive hydrolysis of beta-D-glucose units from the non-reducing ends of (1-&gt;3)-beta-D-glucans, releasing alpha-glucose.. In terms of biological role, glucanases possibly play a role in cell expansion during growth, in cell-cell fusion during mating, and in spore release during sporulation. This enzyme may be involved in beta-glucan degradation and also function biosynthetically as a transglycosylase. The sequence is that of Glucan 1,3-beta-glucosidase (bgl2) from Schizosaccharomyces pombe (strain 972 / ATCC 24843) (Fission yeast).